The following is a 160-amino-acid chain: Protein FrzA (160 aa).

Residues 14 to 155 enclose the CheW-like domain; it reads EQEFFCFRVG…FSKLLQTARQ (142 aa).

Necessary for proper aggregation of cells to form fruiting bodies. FRZ genes define a system of signal transduction analogous to the enterobacterial chemotaxis systems. The sequence is that of Protein FrzA (frzA) from Myxococcus xanthus.